A 566-amino-acid chain; its full sequence is MAFRRVLLSHLRRSHHTCSSLSPHHVSATTQPSIALALFQSRFFSTPSDLDSELTRFRDDSIAGVGSNDHGLEFDDSIASLGSNGHGLEFGDSIGSLGSNGYGLEFGDLSQDLSNYDYLTQPVISLLDSYHDITGLPWWVVIATSTVAFRTALLPILILQRKQTKRISQFLPKLPHFWPPQGSGRSVLDQLKLFRKERKDIGCPSFLWVPAYFSIQISCFFLWITSIRRMSLDHHPGFDSGGALWFQNLTEIPNGLYGPLFPFLIAGLHYTNTQITFTASSVHKVDKFTELAKAYKTFLNLLTCALYFLSFQMPQGSLLYWATNLSFSIAQQSILNHPVVSAKLGLQANDSVQKEAGNPILTNINEGKLTDPSSKGRLISVHNLTPKELVALSAKYLSGGHKDKSIPLLRLALEKDPEYLQAMIILGQALYQKDQFAEAAKCLEQAASKLLDTSPTEVEEVDLLIVASQWAGVSNIRQGKTSEGITHLERVANMKEPDDPKSKAHYLDALVLYSSAIFNEGRREEAAKYLRRVVAYDPSFSELLKQCEEDDTIPTSSSSNSTSKTS.

A mitochondrion-targeting transit peptide spans 1 to 44 (MAFRRVLLSHLRRSHHTCSSLSPHHVSATTQPSIALALFQSRFF). The next 4 helical transmembrane spans lie at 139 to 159 (WVVIATSTVAFRTALLPILIL), 207 to 227 (LWVPAYFSIQISCFFLWITSI), 249 to 269 (LTEIPNGLYGPLFPFLIAGLH), and 301 to 321 (LLTCALYFLSFQMPQGSLLYW). TPR repeat units lie at residues 386-419 (PKELVALSAKYLSGGHKDKSIPLLRLALEKDPEY), 420-453 (LQAMIILGQALYQKDQFAEAAKCLEQAASKLLDT), 465-498 (IVASQWAGVSNIRQGKTSEGITHLERVANMKEPD), and 507-540 (LDALVLYSSAIFNEGRREEAAKYLRRVVAYDPSF). Residues 547–566 (CEEDDTIPTSSSSNSTSKTS) form a disordered region. Residues 555 to 566 (TSSSSNSTSKTS) are compositionally biased toward low complexity.

The protein belongs to the OXA1/ALB3/YidC (TC 2.A.9.2) family.

It is found in the mitochondrion inner membrane. In terms of biological role, probably required for the insertion of integral membrane proteins into the mitochondrial inner membrane. The sequence is that of ALBINO3-like protein 3, mitochondrial (ALB3L3) from Arabidopsis thaliana (Mouse-ear cress).